The primary structure comprises 305 residues: Mas-related G-protein coupled receptor member A2B (305 aa).

Topologically, residues 1 to 17 (MDETLPGSINIRILIPK) are extracellular. Residues 18–38 (LMIIIFGLVGLMGNAIVFWLL) form a helical membrane-spanning segment. The Cytoplasmic segment spans residues 39 to 53 (GFHLRRNAFSVYILN). Residues 54-74 (LALADFLFLLSSIIASTLFLL) traverse the membrane as a helical segment. Over 75–78 (KVSY) the chain is Extracellular. A helical membrane pass occupies residues 79–99 (LSIIFHLCFNTIMMVVYITGI). At 100–132 (SMLSAISTECCLSVLCPTWYRCHRPVHTSTVMC) the chain is on the cytoplasmic side. The helical transmembrane segment at 133–153 (AVIWVLSLLICILNSYFCAVL) threads the bilayer. The Extracellular portion of the chain corresponds to 154 to 167 (HTRYDNDNECLATN). Residues 168–188 (IFTASYMIFLLVVLCLSSLAL) form a helical membrane-spanning segment. The Cytoplasmic portion of the chain corresponds to 189–207 (LARLFCGAGQMKLTRFHVT). A helical transmembrane segment spans residues 208–228 (ILLTLLVFLLCGLPFVIYCIL). At 229–244 (LFKIKDDFHVLDVNFY) the chain is on the extracellular side. A helical transmembrane segment spans residues 245 to 265 (LALEVLTAINSCANPIIYFFV). The Cytoplasmic portion of the chain corresponds to 266 to 305 (GSFRHQLKHQTLKMVLQSALQDTPETAENMVEMSSNKAEP).

The protein belongs to the G-protein coupled receptor 1 family. Mas subfamily. Expressed in a subset of sensory neurons that includes nociceptors. Expressed in the subclass of non-peptidergic sensory neurons that are IB4(+) and VR1(-).

It is found in the cell membrane. Its function is as follows. Orphan receptor. May be a receptor for RFamide-family neuropeptides such as NPFF and NPAF, which are analgesic in vivo. May regulate nociceptor function and/or development, including the sensation or modulation of pain. This is Mas-related G-protein coupled receptor member A2B from Mus musculus (Mouse).